Reading from the N-terminus, the 404-residue chain is uncharacterized protein (404 aa).

6 helical membrane-spanning segments follow: residues 37–57, 92–112, 122–142, 188–208, 230–250, and 272–292; these read LLIL…FVQF, IYNV…FVLG, LLTL…SYIP, MFYA…ILII, IGGI…TIGT, and AFFL…LGIF.

The protein resides in the cell membrane. This is an uncharacterized protein from Mycoplasma pneumoniae (strain ATCC 29342 / M129 / Subtype 1) (Mycoplasmoides pneumoniae).